The chain runs to 528 residues: Vacuolar fusion protein MON1 homolog (528 aa).

Polar residues predominate over residues 1 to 16 (MEVEQTSVRSDTNSTC). Residues 1–50 (MEVEQTSVRSDTNSTCEYLDAEGDPESPNLYQEADPDQEAEQQNHSIISE) form a disordered region.

This sequence belongs to the MON1/SAND family. Component of the Mon1-Ccz1 guanyl-nucleotide exchange factor complex made up of Mon1, Ccz1 and Bulli; the interaction of Bulli with the Mon1-Ccz1 heterodimer is mediated via the C-terminal Mic1 domain of Bulli. Mon1 and Ccz1 form a stable complex which displays Rab7 GEF activity with or without Bulli; GEF activity is enhanced by Bulli possibly by improving membrane association of the complex. Interacts with Rab5 and Rab7; preferentially binds GTP-bound Rab5 and GDP-bound Rab7.

It localises to the cytoplasm. The protein resides in the cytosol. Its activity is regulated as follows. The Rab7 guanyl-nucleotide exchange factor (GEF) activity of the Mon1-Ccz1 complex is autoinhibited by the N-terminal disordered region of Mon1. GEF activity is stimulated by Rab5-mediated recruitment to membranes. Functionally, part of the Mon1-Ccz1 guanyl-nucleotide exchange factor complex specific for Rab7 that promotes the exchange of GDP to GTP, converting Rab7 from an inactive GDP-bound form into an active GTP-bound form. Plays an important role in membrane trafficking through the secretory apparatus. Required for recruitment of Rab7 to endosomal and autophagosomal membranes to mediate endolysosomal and autolysosomal vesicle maturation. Required for fusion of multivesicular bodies and lysosomes but not their formation or trafficking. Involved in the replacement of Rab5 (and possibly Rab4) with Rab7, also known as Rab conversion or the Rab cascade, during endosomal maturation. The Mon1-Ccz1 complex is recruited to phosphatidylinositol 3-phosphate (PtdIns[3]P) enriched membranes by Rab5, which stimulates recruitment and guanyl-nucleotide exchange of Rab7. Together with Rab7 required for autolysosome formation in fat cells and autophagic degradation during starvation-induced basal and developmental autophagy. Involved in neuromuscular junction (NMJ) presynaptic bouton function and morphogenesis. Together with Rab7, regulates levels of postsynaptic glutamate receptor GluRIIA in the NMJ presynapse. This chain is Vacuolar fusion protein MON1 homolog, found in Drosophila melanogaster (Fruit fly).